Reading from the N-terminus, the 200-residue chain is Peptidyl-tRNA hydrolase (200 aa).

Tyr-15 contacts tRNA. The Proton acceptor role is filled by His-20. Tyr-66, Asn-68, and Asn-114 together coordinate tRNA.

It belongs to the PTH family. In terms of assembly, monomer.

Its subcellular location is the cytoplasm. It carries out the reaction an N-acyl-L-alpha-aminoacyl-tRNA + H2O = an N-acyl-L-amino acid + a tRNA + H(+). Functionally, hydrolyzes ribosome-free peptidyl-tRNAs (with 1 or more amino acids incorporated), which drop off the ribosome during protein synthesis, or as a result of ribosome stalling. Its function is as follows. Catalyzes the release of premature peptidyl moieties from peptidyl-tRNA molecules trapped in stalled 50S ribosomal subunits, and thus maintains levels of free tRNAs and 50S ribosomes. This is Peptidyl-tRNA hydrolase from Paraburkholderia phymatum (strain DSM 17167 / CIP 108236 / LMG 21445 / STM815) (Burkholderia phymatum).